We begin with the raw amino-acid sequence, 86 residues long: Large ribosomal subunit protein uL23 (86 aa).

The protein belongs to the universal ribosomal protein uL23 family. As to quaternary structure, part of the 50S ribosomal subunit. Contacts protein L29.

Its function is as follows. Binds to 23S rRNA. One of the proteins that surrounds the polypeptide exit tunnel on the outside of the ribosome. This Methanococcus maripaludis (strain DSM 14266 / JCM 13030 / NBRC 101832 / S2 / LL) protein is Large ribosomal subunit protein uL23.